A 360-amino-acid polypeptide reads, in one-letter code: 3-dehydroquinate synthase (360 aa).

NAD(+) is bound by residues 71–76, 105–109, 129–130, lysine 142, lysine 151, and 169–172; these read DGEQYK, GVIGD, TT, and CLDT. Glutamate 184, histidine 247, and histidine 264 together coordinate Zn(2+).

Belongs to the sugar phosphate cyclases superfamily. Dehydroquinate synthase family. Co(2+) is required as a cofactor. Zn(2+) serves as cofactor. The cofactor is NAD(+).

The protein resides in the cytoplasm. The enzyme catalyses 7-phospho-2-dehydro-3-deoxy-D-arabino-heptonate = 3-dehydroquinate + phosphate. It functions in the pathway metabolic intermediate biosynthesis; chorismate biosynthesis; chorismate from D-erythrose 4-phosphate and phosphoenolpyruvate: step 2/7. Its function is as follows. Catalyzes the conversion of 3-deoxy-D-arabino-heptulosonate 7-phosphate (DAHP) to dehydroquinate (DHQ). This is 3-dehydroquinate synthase from Erwinia tasmaniensis (strain DSM 17950 / CFBP 7177 / CIP 109463 / NCPPB 4357 / Et1/99).